We begin with the raw amino-acid sequence, 237 residues long: MRKITLALSAACLLFSLNNAVVARASAPTPLYTGTTAAILAEQAPIHWVSVAQIENSLMGRAPMAVGFDIDDTVLFSSPGFWRGKKTFSPASEEYLKNPEFWEKMNNGWDEFSIPKEVGRALIAMHVKRGDSIYFVTGRSQTKTETVSKTLQGDFAIPSANMNPVIFAGDKAGQNTKTQWLEQKNIKVFYGDSDNDITAARDVGARGIRVLRASNSTYRPLPMAGAFGEEVIVNSEY.

Positions 1–25 are cleaved as a signal peptide; that stretch reads MRKITLALSAACLLFSLNNAVVARA. Residue D69 is the Nucleophile of the active site. Residues D69 and D71 each contribute to the Mg(2+) site. The Proton donor role is filled by D71. Substrate-binding positions include 137–138 and K177; that span reads TG. Residue D192 coordinates Mg(2+).

Belongs to the class B bacterial acid phosphatase family. Homotetramer. Mg(2+) is required as a cofactor.

The protein localises to the periplasm. It carries out the reaction a phosphate monoester + H2O = an alcohol + phosphate. Dephosphorylates several organic phosphate monoesters. Also has a phosphotransferase activity catalyzing the transfer of low-energy phosphate groups from organic phosphate monoesters to free hydroxyl groups of various organic compounds. In Enterobacter sp. (strain 638), this protein is Class B acid phosphatase.